We begin with the raw amino-acid sequence, 202 residues long: Solute carrier family 66 member 3 (202 aa).

The signal sequence occupies residues 1–19 (MEAGLLWFCNWSTLGVCAA). 4 helical membrane-spanning segments follow: residues 33–53 (SARG…LVFL), 64–84 (LTYL…LFVF), 94–114 (LPYM…KWII), and 171–191 (LTIL…TATV).

The protein localises to the membrane. The chain is Solute carrier family 66 member 3 (Slc66a3) from Mus musculus (Mouse).